A 166-amino-acid chain; its full sequence is Interferon gamma (166 aa).

The signal sequence occupies residues 1–23 (MKYTSYFLALLLCGLLGFSGSYG). Gln24 is modified (pyrrolidone carboxylic acid). 2 N-linked (GlcNAc...) asparagine glycosylation sites follow: Asn39 and Asn106.

It belongs to the type II (or gamma) interferon family. Homodimer. Interacts with IFNGR1 (via extracellular domain); this interaction promotes IFNGR1 dimerization. As to expression, released primarily from activated T lymphocytes.

The protein localises to the secreted. In terms of biological role, type II interferon produced by immune cells such as T-cells and NK cells that plays crucial roles in antimicrobial, antiviral, and antitumor responses by activating effector immune cells and enhancing antigen presentation. Primarily signals through the JAK-STAT pathway after interaction with its receptor IFNGR1 to affect gene regulation. Upon IFNG binding, IFNGR1 intracellular domain opens out to allow association of downstream signaling components JAK2, JAK1 and STAT1, leading to STAT1 activation, nuclear translocation and transcription of IFNG-regulated genes. Many of the induced genes are transcription factors such as IRF1 that are able to further drive regulation of a next wave of transcription. Plays a role in class I antigen presentation pathway by inducing a replacement of catalytic proteasome subunits with immunoproteasome subunits. In turn, increases the quantity, quality, and repertoire of peptides for class I MHC loading. Increases the efficiency of peptide generation also by inducing the expression of activator PA28 that associates with the proteasome and alters its proteolytic cleavage preference. Up-regulates as well MHC II complexes on the cell surface by promoting expression of several key molecules such as cathepsins B/CTSB, H/CTSH, and L/CTSL. Participates in the regulation of hematopoietic stem cells during development and under homeostatic conditions by affecting their development, quiescence, and differentiation. The polypeptide is Interferon gamma (IFNG) (Bos taurus (Bovine)).